Reading from the N-terminus, the 206-residue chain is N-(5'-phosphoribosyl)anthranilate isomerase (206 aa).

Belongs to the TrpF family.

The enzyme catalyses N-(5-phospho-beta-D-ribosyl)anthranilate = 1-(2-carboxyphenylamino)-1-deoxy-D-ribulose 5-phosphate. The protein operates within amino-acid biosynthesis; L-tryptophan biosynthesis; L-tryptophan from chorismate: step 3/5. This Chlamydia caviae (strain ATCC VR-813 / DSM 19441 / 03DC25 / GPIC) (Chlamydophila caviae) protein is N-(5'-phosphoribosyl)anthranilate isomerase.